We begin with the raw amino-acid sequence, 500 residues long: MKKYIVALDQGTTSSRAIIFDKEQNIIGVSQKEFNQIYPREGWVEHDPMEIWATQYSVLQEVMAKCNITQENIAAIGITNQRETTIVWDKNTGVPIYNAIVWQCRRTADICDDLKERDGLVDYIRENTGLVLDAYFSGTKIKWILDNVEGAREKAEKGELLFGTVDSWLVWKLTNGKVHVTDYTNASRTMIFNIKNLEWDERMLKELDIPRSMLPEVKNSSEIYGYANLGAKGGIRVPIAGIAGDQQAALFGQAAFNKGDVKNTYGTGCFLLMNTGEELVKSKSGLLTTIAIGLHGKVQYALEGSVFVGGAVIQWLRDELRIISDSSDTEYFATKVEDNGGVYVVPAFVGLGAPYWDMYARGTIVGLTRGTNRNHIIRASLESIAYQTRDVLEAMINDVGYDINCIKVDGGASRNNFLMQFQSDLVGKKVIKPIITETTALGAAYLAGLAVGYWSDKEEIAKLWFASEEFEPNISEERRNKYYKKWKKAIERSKEWAIED.

Threonine 12 contributes to the ADP binding site. The ATP site is built by threonine 12, threonine 13, and serine 14. Threonine 12 provides a ligand contact to sn-glycerol 3-phosphate. Residue arginine 16 participates in ADP binding. Positions 82, 83, 135, and 245 each coordinate sn-glycerol 3-phosphate. Residues arginine 82, glutamate 83, tyrosine 135, aspartate 245, and glutamine 246 each coordinate glycerol. Residues threonine 267 and glycine 310 each coordinate ADP. Threonine 267, glycine 310, glutamine 314, and glycine 411 together coordinate ATP. Glycine 411 and asparagine 415 together coordinate ADP.

This sequence belongs to the FGGY kinase family. Homotetramer and homodimer (in equilibrium).

The enzyme catalyses glycerol + ATP = sn-glycerol 3-phosphate + ADP + H(+). The protein operates within polyol metabolism; glycerol degradation via glycerol kinase pathway; sn-glycerol 3-phosphate from glycerol: step 1/1. With respect to regulation, activated by phosphorylation and inhibited by fructose 1,6-bisphosphate (FBP). Functionally, key enzyme in the regulation of glycerol uptake and metabolism. Catalyzes the phosphorylation of glycerol to yield sn-glycerol 3-phosphate. The sequence is that of Glycerol kinase from Clostridium perfringens (strain SM101 / Type A).